Consider the following 341-residue polypeptide: ATP-dependent 6-phosphofructokinase 3 (341 aa).

Residues glycine 10, 72 to 73, and 102 to 105 contribute to the ATP site; these read RV and GEGT. Glutamate 103 lines the Mg(2+) pocket. Substrate is bound by residues 125 to 127, arginine 162, 169 to 171, glutamate 222, arginine 266, and 272 to 275; these read TID, MGR, and HVQR. The active-site Proton acceptor is the aspartate 127.

The protein belongs to the phosphofructokinase type A (PFKA) family. Mixed-substrate PFK group III subfamily. As to quaternary structure, homodimer or homotetramer. Mg(2+) is required as a cofactor.

The protein resides in the cytoplasm. It carries out the reaction beta-D-fructose 6-phosphate + ATP = beta-D-fructose 1,6-bisphosphate + ADP + H(+). The protein operates within carbohydrate degradation; glycolysis; D-glyceraldehyde 3-phosphate and glycerone phosphate from D-glucose: step 3/4. Functionally, catalyzes the phosphorylation of D-fructose 6-phosphate to fructose 1,6-bisphosphate by ATP, the first committing step of glycolysis. In Streptomyces coelicolor (strain ATCC BAA-471 / A3(2) / M145), this protein is ATP-dependent 6-phosphofructokinase 3.